Consider the following 91-residue polypeptide: Small ribosomal subunit protein uS15c (91 aa).

It belongs to the universal ribosomal protein uS15 family. Part of the 30S ribosomal subunit.

Its subcellular location is the plastid. The protein localises to the chloroplast. The polypeptide is Small ribosomal subunit protein uS15c (rps15) (Adiantum capillus-veneris (Maidenhair fern)).